A 570-amino-acid chain; its full sequence is Adenine deaminase (570 aa).

It belongs to the metallo-dependent hydrolases superfamily. Adenine deaminase family. It depends on Mn(2+) as a cofactor.

The enzyme catalyses adenine + H2O + H(+) = hypoxanthine + NH4(+). This Petrotoga mobilis (strain DSM 10674 / SJ95) protein is Adenine deaminase.